The chain runs to 424 residues: GTPase Obg (424 aa).

Residues 2-158 (AKFIDQVKIM…YEANIVLKIL (157 aa)) form the Obg domain. The OBG-type G domain maps to 159-326 (SDVGLVGLPS…LKKIIWEFLE (168 aa)). GTP is bound by residues 165-172 (GLPSCGKS), 190-194 (FTTLV), 211-214 (DLPG), 280-283 (NKSD), and 307-309 (SAL). Residues S172 and T192 each contribute to the Mg(2+) site. The region spanning 344 to 422 (KEINYEPDFV…IYQHKFEWEE (79 aa)) is the OCT domain.

The protein belongs to the TRAFAC class OBG-HflX-like GTPase superfamily. OBG GTPase family. Monomer. Mg(2+) is required as a cofactor.

The protein localises to the cytoplasm. Functionally, an essential GTPase which binds GTP, GDP and possibly (p)ppGpp with moderate affinity, with high nucleotide exchange rates and a fairly low GTP hydrolysis rate. Plays a role in control of the cell cycle, stress response, ribosome biogenesis and in those bacteria that undergo differentiation, in morphogenesis control. The sequence is that of GTPase Obg from Mycoplasmopsis synoviae (strain 53) (Mycoplasma synoviae).